The sequence spans 323 residues: Methionyl-tRNA formyltransferase (323 aa).

Residue 115 to 118 (SLLP) participates in (6S)-5,6,7,8-tetrahydrofolate binding.

Belongs to the Fmt family.

It carries out the reaction L-methionyl-tRNA(fMet) + (6R)-10-formyltetrahydrofolate = N-formyl-L-methionyl-tRNA(fMet) + (6S)-5,6,7,8-tetrahydrofolate + H(+). Functionally, attaches a formyl group to the free amino group of methionyl-tRNA(fMet). The formyl group appears to play a dual role in the initiator identity of N-formylmethionyl-tRNA by promoting its recognition by IF2 and preventing the misappropriation of this tRNA by the elongation apparatus. This chain is Methionyl-tRNA formyltransferase, found in Blochmanniella floridana.